We begin with the raw amino-acid sequence, 702 residues long: MARTTPISRYRNIGISAHIDAGKTTTTERILFYTGVNHKIGEVHDGAATMDWMEQEQERGITITSAATTAFWSGMAKQFEPHRINIIDTPGHVDFTIEVERSMRVLDGAVMVYCAVGGVQPQSETVWRQANKYHVPRIAFVNKMDRMGANFLKVVNQIKTRLGANPVPLQLAIGAEEAFTGIVDLVKMKAINWNEADQGVTFTYEDIPADMVELANEWHQFLVESAAEASEELMDKYLGGETLSEEEIKNALRQRVLNNEIILVTCGSAFKNKGVQAMLDAVIEYLPSPTDVPAIKGILDDGKDTPAERHSDDNEPFAALAFKIATDPFVGNLTFFRVYSGVVNSGDTVLNSVKSARERFGRIVQMHANKREEIKEVRAGDIAAAIGLKDVTTGDTLCDQNAPIILERMEFPEPVISIAVEPKTKADQEKMGLALGRLAKEDPSFRVRTDEESNQTIISGMGELHLEIIVDRMKREFNVEANVGKPQVAYRETIRDTVKDVEGKHAKQSGGRGQYGHVVIDMFPLEPGGEGYTFTNDIKGGVIPGEYIPAVDKGIQEQLKSGPMAGYPVVDLGVRLHFGSYHDVDSSELAFKLAASLAFKEAFKRAKPVLLEPIMKVEVETPEDYMGDVIGDLNRRRGMIEGMEDTATGKTVRAQVPLSEMFGYATDLRSQTQGRASYSMEFLKYAEAPTNVAQAVIEARGK.

The region spanning S8 to T290 is the tr-type G domain. GTP contacts are provided by residues A17 to T24, D88 to H92, and N142 to D145.

It belongs to the TRAFAC class translation factor GTPase superfamily. Classic translation factor GTPase family. EF-G/EF-2 subfamily.

It is found in the cytoplasm. Functionally, catalyzes the GTP-dependent ribosomal translocation step during translation elongation. During this step, the ribosome changes from the pre-translocational (PRE) to the post-translocational (POST) state as the newly formed A-site-bound peptidyl-tRNA and P-site-bound deacylated tRNA move to the P and E sites, respectively. Catalyzes the coordinated movement of the two tRNA molecules, the mRNA and conformational changes in the ribosome. This chain is Elongation factor G, found in Edwardsiella ictaluri (strain 93-146).